The chain runs to 424 residues: 3-phosphoshikimate 1-carboxyvinyltransferase (424 aa).

3 residues coordinate 3-phosphoshikimate: K21, S22, and R26. Position 21 (K21) interacts with phosphoenolpyruvate. G92 and R120 together coordinate phosphoenolpyruvate. S163, S164, Q165, S191, D306, and K333 together coordinate 3-phosphoshikimate. Q165 contributes to the phosphoenolpyruvate binding site. D306 acts as the Proton acceptor in catalysis. Positions 337, 379, and 405 each coordinate phosphoenolpyruvate.

It belongs to the EPSP synthase family. In terms of assembly, monomer.

The protein localises to the cytoplasm. The enzyme catalyses 3-phosphoshikimate + phosphoenolpyruvate = 5-O-(1-carboxyvinyl)-3-phosphoshikimate + phosphate. It participates in metabolic intermediate biosynthesis; chorismate biosynthesis; chorismate from D-erythrose 4-phosphate and phosphoenolpyruvate: step 6/7. In terms of biological role, catalyzes the transfer of the enolpyruvyl moiety of phosphoenolpyruvate (PEP) to the 5-hydroxyl of shikimate-3-phosphate (S3P) to produce enolpyruvyl shikimate-3-phosphate and inorganic phosphate. This Clostridium perfringens (strain ATCC 13124 / DSM 756 / JCM 1290 / NCIMB 6125 / NCTC 8237 / Type A) protein is 3-phosphoshikimate 1-carboxyvinyltransferase.